The following is a 790-amino-acid chain: MEKMSRVTTALGGSVLTGRTMHCHLDAPANAISVCRDAAQVVVAGRSIFKIYAIEEEQFVEKLNLRVGRKPSLNLSCADVVWHQMDENLLATAATNGVVVTWNLGRPSRNKQDQLFTEHKRTVNKVCFHPTEAHVLLSGSQDGFMKCFDLRRKDSVSTFSGQSESVRDVQFSIRDYFTFASTFENGNVQLWDIRRPDRCERMFTAHNGPVFCCDWHPEDRGWLATGGRDKMVKVWDMTTHRAKEMHCVQTIASVARVKWRPECRHHLATCSMMVDHNIYVWDVRRPFVPAAMFEEHRDVTTGIAWRHPHDPSFLLSGSKDSSLCQHLFRDASQPVERANPEGLCYGLFGDLAFAAKESLVAAESGRKPYTGDRRHPIFFKRKLDPAEPFAGLASSALSVFETEPGGGGMRWFVDTAERYALAGRPLAELCDHNAKVARELGRNQVAQTWTMLRIIYCSPGLVPTANLNHSVGKGGSCGLPLMNSFNLKDMAPGLGSETRLDRSKGDARSDTVLLDSSATLITNEDNEETEGSDVPADYLLGDVEGEEDELYLLDPEHAHPEDPECVLPQEAFPLRHEIVDTPPGPEHLQDKADSPHVSGSEADVASLAPVDSSFSLLSVSHALYDSRLPPDFFGVLVRDMLHFYAEQGDVQMAVSVLIVLGERVRKDIDEQTQEHWYTSYIDLLQRFRLWNVSNEVVKLSTSRAVSCLNQASTTLHVNCSHCKRPMSSRGWVCDRCHRCASMCAVCHHVVKGLFVWCQGCSHGGHLQHIMKWLEGSSHCPAGCGHLCEYS.

WD repeat units lie at residues 72–112 (SLNL…RNKQ), 118–158 (EHKR…SVST), 161–201 (GQSE…RCER), 205–245 (AHNG…AKEM), 249–291 (QTIA…VPAA), and 295–338 (EHRD…VERA). S155 is subject to Phosphoserine; by AMPK. Residues S470 and S496 each carry the phosphoserine modification. T581 bears the Phosphothreonine mark. S594 and S598 each carry phosphoserine. The segment at 718 to 740 (NCSHCKRPMSSRGWVCDRCHRCA) adopts a C4-type zinc-finger fold. Zn(2+)-binding residues include C719, C722, C733, C736, C743, C746, C757, C760, H762, H765, H768, C779, C783, H785, and C787. The segment at 741 to 790 (SMCAVCHHVVKGLFVWCQGCSHGGHLQHIMKWLEGSSHCPAGCGHLCEYS) adopts an RING-type; atypical zinc-finger fold.

This sequence belongs to the WD repeat WDR24 family. In terms of assembly, component of the GATOR2 subcomplex, composed of MIOS, SEC13, SEH1L, WDR24 and WDR59. The GATOR2 complex interacts with CASTOR1 and CASTOR2; the interaction is negatively regulated by arginine. The GATOR2 complex interacts with SESN1, SESN2 and SESN3; the interaction is negatively regulated by amino acids. SESN1, SESN2 and SESN3 convey leucine availability via direct interaction with SEH1L and WDR24. Post-translationally, phosphorylation at Ser-155 by AMPK in response to glucose deprivation inactivates WDR24 by promoting interaction with 14-3-3 proteins, such as YWHAG, preventing assembly of the GATOR2 complex. In terms of processing, autoubiquitinated; MIOS is required to prevent autoubiquitination.

It localises to the lysosome membrane. The catalysed reaction is S-ubiquitinyl-[E2 ubiquitin-conjugating enzyme]-L-cysteine + [acceptor protein]-L-lysine = [E2 ubiquitin-conjugating enzyme]-L-cysteine + N(6)-ubiquitinyl-[acceptor protein]-L-lysine.. It functions in the pathway protein modification; protein ubiquitination. Its activity is regulated as follows. The GATOR2 complex is negatively regulated by the upstream amino acid sensors CASTOR1 and SESN2, which sequester the GATOR2 complex in absence of amino acids. In the presence of abundant amino acids, GATOR2 is released from CASTOR1 and SESN2 and activated. In terms of biological role, catalytic component of the GATOR2 complex, a multiprotein complex that acts as an activator of the amino acid-sensing branch of the mTORC1 signaling pathway. The GATOR2 complex indirectly activates mTORC1 through the inhibition of the GATOR1 subcomplex. GATOR2 probably acts as an E3 ubiquitin-protein ligase toward GATOR1. In the presence of abundant amino acids, the GATOR2 complex mediates ubiquitination of the NPRL2 core component of the GATOR1 complex, leading to GATOR1 inactivation. In the absence of amino acids, GATOR2 is inhibited, activating the GATOR1 complex. In addition to its role in regulation of the mTORC1 complex, promotes the acidification of lysosomes and facilitates autophagic flux. Within the GATOR2 complex, WDR24 constitutes the catalytic subunit that mediates 'Lys-6'-linked ubiquitination of NPRL2. The chain is GATOR2 complex protein WDR24 from Homo sapiens (Human).